Reading from the N-terminus, the 312-residue chain is Malate dehydrogenase (312 aa).

NAD(+) contacts are provided by residues 12–17 (GAGFTG) and D36. Substrate contacts are provided by R87 and R93. Residues N100 and 123-125 (LTN) contribute to the NAD(+) site. Residue N125 participates in substrate binding. The residue at position 149 (S149) is a Phosphoserine. R156 contributes to the substrate binding site. The Proton acceptor role is filled by H180.

The protein belongs to the LDH/MDH superfamily. MDH type 3 family.

It carries out the reaction (S)-malate + NAD(+) = oxaloacetate + NADH + H(+). In terms of biological role, catalyzes the reversible oxidation of malate to oxaloacetate. This Geobacillus kaustophilus (strain HTA426) protein is Malate dehydrogenase.